The chain runs to 488 residues: MTVQTAPQIVKNYIGGEWVESISTKMEAVYNPATGEVIAQVPLSTKVDVEQAVSAANEAFKSWSKTAVPKRARILFKYQQLLVDNWEELAKLITIENGKSYNEAYGEVLRGIECVEFAAGAPTLMMGKQLPDIATGIESGMYRYPIGVIGGITPFNFPMMVPCWMFPLAIACGNTFVLKPSERTPLLAARLAELAEEAGLPKGVLNIVNGAHDVVNGLLEHKLVKAISFVGSQPVAEYVYKKGTENLKRVQALAGAKNHSIVLNDANLELATKQIISAAFGSAGERCMAASVVTVEEEIADQLVGRLVEEANKIVIGNGLDEDVFLGPVIRDNHKERTIGYIDSGVEQGATLVRDGREDTAVKGAGYFVGPTIFDHVTKEMKIWQDEIFAPVLSIVRVKSLDEAIEIANESRFANGACIYTDSGASVRQFRETIESGMLGVNVGVPAPMAFFPFSGWKDSFYGDLHANGTDGVEFYTRKKMLTSRWEK.

Residues F155, K179, E182, R183, and S232 each coordinate NAD(+). The active-site Nucleophile is C287. Residue E387 coordinates NAD(+).

The protein belongs to the aldehyde dehydrogenase family. IolA subfamily. As to quaternary structure, homotetramer.

The catalysed reaction is 3-oxopropanoate + NAD(+) + CoA + H2O = hydrogencarbonate + acetyl-CoA + NADH + H(+). The enzyme catalyses 2-methyl-3-oxopropanoate + NAD(+) + CoA + H2O = propanoyl-CoA + hydrogencarbonate + NADH + H(+). Its pathway is polyol metabolism; myo-inositol degradation into acetyl-CoA; acetyl-CoA from myo-inositol: step 7/7. Its function is as follows. Catalyzes the oxidation of malonate semialdehyde (MSA) and methylmalonate semialdehyde (MMSA) into acetyl-CoA and propanoyl-CoA, respectively. Is involved in a myo-inositol catabolic pathway. Bicarbonate, and not CO2, is the end-product of the enzymatic reaction. This is Malonate-semialdehyde dehydrogenase 2 from Bacillus cereus (strain ZK / E33L).